We begin with the raw amino-acid sequence, 245 residues long: MYRVFEALDELSAIVEEARGVPMTAGCVVPRGDVLELIDDIKDAIPGELDDAQDVLDARDSMLQDAKTHADSMVSSATTEAESILNHARTEADRILSDAKAQADRMVSEARQHSERMVADAREEAIRIATAAKREYEASVSRAQAECDRLIENGNISYEKAVQEGIKEQQRLVSQNEVVAAANAESTRLVDTAHAEADRLRGECDIYVDNKLAEFEEFLNGTLRSVGRGRHQLRTAAGTHDYAVR.

This is an uncharacterized protein from Mycobacterium tuberculosis (strain CDC 1551 / Oshkosh).